The following is a 248-amino-acid chain: Probable transcriptional regulatory protein BH14810 (248 aa).

This sequence belongs to the TACO1 family.

It is found in the cytoplasm. In Bartonella henselae (strain ATCC 49882 / DSM 28221 / CCUG 30454 / Houston 1) (Rochalimaea henselae), this protein is Probable transcriptional regulatory protein BH14810.